A 398-amino-acid chain; its full sequence is Phosphoglycerate kinase (398 aa).

Residues 21–23 (DIN), Arg37, 60–63 (HQGR), Arg117, and Arg157 contribute to the substrate site. ATP contacts are provided by residues Glu332 and 357–360 (GGDT).

It belongs to the phosphoglycerate kinase family. As to quaternary structure, monomer.

It is found in the cytoplasm. The enzyme catalyses (2R)-3-phosphoglycerate + ATP = (2R)-3-phospho-glyceroyl phosphate + ADP. Its pathway is carbohydrate degradation; glycolysis; pyruvate from D-glyceraldehyde 3-phosphate: step 2/5. In Halobacterium salinarum (strain ATCC 29341 / DSM 671 / R1), this protein is Phosphoglycerate kinase.